We begin with the raw amino-acid sequence, 417 residues long: RH-like protein IIF (417 aa).

11 helical membrane-spanning segments follow: residues 12–32, 44–64, 77–97, 125–145, 172–192, 203–223, 238–258, 265–285, 287–307, 331–351, and 358–378; these read CLPLCALTLEAALILLFYFFT, LVASYQVGQDLTVMAAIGFGF, VAFNLFMLALGVQWAILLDGF, ISAGAVLGYVNLVQLVVMVLV, FYLFTAYFGVTVAWCLPKPLP, TIPSLSAMLGALFLWMFWPSF, VFNTYYALAVSVVTAISGSSL, ISMTYVHSAVLAGGVAVGTSC, LIPSPWLAMVLGLVAGLISIG, NFSLLGLLGEIIYIVLVVRHT, and MIGFQVLLSMGELSLAIAIAL.

This sequence belongs to the ammonium transporter (TC 2.A.49) family. Rh subfamily.

The protein localises to the membrane. May be part of an oligomeric complex which is likely to have a transport or channel function in the erythrocyte membrane. The sequence is that of RH-like protein IIF from Pan troglodytes (Chimpanzee).